The sequence spans 205 residues: MIGRLRGLLVEKQAPEILLEVQGLGYEVQMPLTSFYELPELNQEAIVYTHFVVREDAQLLYGFITKQERALFRLLIKTNGVGPKLALTILSGMTASEFVACVERDDIATLVKLPGVGKKTAERLLVEMRDKLKSLMEASAGSEREFMLKSNYTPAPVINTAEEDAIAALLSLGYKPAQASKAVSAVYQDGMDSETLIKSSLKSML.

The tract at residues 1–64 (MIGRLRGLLV…EDAQLLYGFI (64 aa)) is domain I. Residues 65-143 (TKQERALFRL…SLMEASAGSE (79 aa)) are domain II. Positions 144 to 156 (REFMLKSNYTPAP) are flexible linker. The segment at 157–205 (VINTAEEDAIAALLSLGYKPAQASKAVSAVYQDGMDSETLIKSSLKSML) is domain III.

This sequence belongs to the RuvA family. Homotetramer. Forms an RuvA(8)-RuvB(12)-Holliday junction (HJ) complex. HJ DNA is sandwiched between 2 RuvA tetramers; dsDNA enters through RuvA and exits via RuvB. An RuvB hexamer assembles on each DNA strand where it exits the tetramer. Each RuvB hexamer is contacted by two RuvA subunits (via domain III) on 2 adjacent RuvB subunits; this complex drives branch migration. In the full resolvosome a probable DNA-RuvA(4)-RuvB(12)-RuvC(2) complex forms which resolves the HJ.

The protein localises to the cytoplasm. In terms of biological role, the RuvA-RuvB-RuvC complex processes Holliday junction (HJ) DNA during genetic recombination and DNA repair, while the RuvA-RuvB complex plays an important role in the rescue of blocked DNA replication forks via replication fork reversal (RFR). RuvA specifically binds to HJ cruciform DNA, conferring on it an open structure. The RuvB hexamer acts as an ATP-dependent pump, pulling dsDNA into and through the RuvAB complex. HJ branch migration allows RuvC to scan DNA until it finds its consensus sequence, where it cleaves and resolves the cruciform DNA. The chain is Holliday junction branch migration complex subunit RuvA from Shewanella sediminis (strain HAW-EB3).